The sequence spans 300 residues: MKDLFRRAPKRFTAARIENQAIPDNMWVKCPSCGDLIYTRQFSDNLKVCKCGYHMRLTAREWLGLLDDGSFVEFDAALASVDALGFVSPRHVYEQKLIESRQQTGLNDALITSSGAINGMLLCLAVTEFEFIGGSMGSAYGERLARVIERAADARLPLLTINASGGARQEEGTLALLQMAKVNMALTRLAAAGQPHIALLVDPCYGGVLASYTSVADVIIAEPGARVGFAGRRVIEQTIRQKLPVHFQTAEFLLDHGMIDMVTPRSELRGVLSTLLRLYRDAFAHTSAAQHVPALTHVQG.

Positions 26 to 294 constitute a CoA carboxyltransferase N-terminal domain; the sequence is MWVKCPSCGD…HTSAAQHVPA (269 aa). Residues Cys30, Cys33, Cys49, and Cys51 each coordinate Zn(2+). A C4-type zinc finger spans residues 30–51; that stretch reads CPSCGDLIYTRQFSDNLKVCKC.

The protein belongs to the AccD/PCCB family. Acetyl-CoA carboxylase is a heterohexamer composed of biotin carboxyl carrier protein (AccB), biotin carboxylase (AccC) and two subunits each of ACCase subunit alpha (AccA) and ACCase subunit beta (AccD). Zn(2+) is required as a cofactor.

It is found in the cytoplasm. The catalysed reaction is N(6)-carboxybiotinyl-L-lysyl-[protein] + acetyl-CoA = N(6)-biotinyl-L-lysyl-[protein] + malonyl-CoA. It functions in the pathway lipid metabolism; malonyl-CoA biosynthesis; malonyl-CoA from acetyl-CoA: step 1/1. In terms of biological role, component of the acetyl coenzyme A carboxylase (ACC) complex. Biotin carboxylase (BC) catalyzes the carboxylation of biotin on its carrier protein (BCCP) and then the CO(2) group is transferred by the transcarboxylase to acetyl-CoA to form malonyl-CoA. The chain is Acetyl-coenzyme A carboxylase carboxyl transferase subunit beta 1 from Roseiflexus sp. (strain RS-1).